Here is a 202-residue protein sequence, read N- to C-terminus: Glycerol-3-phosphate acyltransferase (202 aa).

Transmembrane regions (helical) follow at residues 3–23 (NLII…LILA), 87–107 (LLWS…YLLF), 118–138 (GAMI…WVVI), 144–164 (ISSL…FIFN), and 167–187 (LEIH…YKHL).

This sequence belongs to the PlsY family. As to quaternary structure, probably interacts with PlsX.

The protein resides in the cell inner membrane. The enzyme catalyses an acyl phosphate + sn-glycerol 3-phosphate = a 1-acyl-sn-glycero-3-phosphate + phosphate. It participates in lipid metabolism; phospholipid metabolism. In terms of biological role, catalyzes the transfer of an acyl group from acyl-phosphate (acyl-PO(4)) to glycerol-3-phosphate (G3P) to form lysophosphatidic acid (LPA). This enzyme utilizes acyl-phosphate as fatty acyl donor, but not acyl-CoA or acyl-ACP. The chain is Glycerol-3-phosphate acyltransferase from Campylobacter jejuni (strain RM1221).